The primary structure comprises 670 residues: MTPTPDAPAAADAATGAGWLARRRGALARVALAPVAQAIGRVERVADGIAFVSGLEDTMLNEVLRFEGGVTGFAHTLDEDLISVVLLDPDAGVRAQTAVARTGAVLEVPAGPQLLGRVVDPLGRPLDGGAPLDAAHTLPIERAAPAIIERDLVSEPLDTGVLIVDALFTIGRGQRELIIGDRATGKTSLAIDAIVNQRHSDVICVYVAIGQRASAVRRVIDAVRRYGAPERCVFVVAPAACAPGLQWIAPFAGFSIAEYFRDRGQHALVVVDDLTKHAATHRELALLTREPPGREAYPGDIFYVHARLLERAAKLSAALGGGSLSALPIAETDAGNLAAYIPTNLISITDGQIVLDSALFAANQRPAVDVGLSVSRVGGKAQHPALRAASGRLRLDYAQFLELEAFTRFGGLTDARLRAQITRGERIRALITQPRFRALRTLDEVVLLKALAAGALDAMSPDLVAPLRERLPAWLDARIAALTPALAPPRDWLADDAALDALAESVGELIERIAADAAHRATAGMPAEDAAGDIGGAFGGEQARGDADRDADHGANREVSREVSPEASREVSREVSREVSHEADRDAAADAARVAGRAPGRAEPDRAAPRAMPDGPPRAQADGDRASASRPRPDARGDAARTAPSPQGGAEVNVNAAANVDAEAEARHKR.

180–187 (GDRATGKT) is a binding site for ATP. The interval 527 to 670 (AEDAAGDIGG…DAEAEARHKR (144 aa)) is disordered. The segment covering 543-588 (ARGDADRDADHGANREVSREVSPEASREVSREVSREVSHEADRDAA) has biased composition (basic and acidic residues). Over residues 589-599 (ADAARVAGRAP) the composition is skewed to low complexity. Residues 621-639 (ADGDRASASRPRPDARGDA) are compositionally biased toward basic and acidic residues. Over residues 640 to 661 (ARTAPSPQGGAEVNVNAAANVD) the composition is skewed to low complexity.

The protein belongs to the ATPase alpha/beta chains family. As to quaternary structure, F-type ATPases have 2 components, CF(1) - the catalytic core - and CF(0) - the membrane proton channel. CF(1) has five subunits: alpha(3), beta(3), gamma(1), delta(1), epsilon(1). CF(0) has three main subunits: a(1), b(2) and c(9-12). The alpha and beta chains form an alternating ring which encloses part of the gamma chain. CF(1) is attached to CF(0) by a central stalk formed by the gamma and epsilon chains, while a peripheral stalk is formed by the delta and b chains.

The protein localises to the cell inner membrane. The catalysed reaction is ATP + H2O + 4 H(+)(in) = ADP + phosphate + 5 H(+)(out). Produces ATP from ADP in the presence of a proton gradient across the membrane. The alpha chain is a regulatory subunit. The polypeptide is ATP synthase subunit alpha 2 (Burkholderia pseudomallei (strain 668)).